The chain runs to 122 residues: Large ribosomal subunit protein uL14 (122 aa).

It belongs to the universal ribosomal protein uL14 family. Part of the 50S ribosomal subunit. Forms a cluster with proteins L3 and L19. In the 70S ribosome, L14 and L19 interact and together make contacts with the 16S rRNA in bridges B5 and B8.

Functionally, binds to 23S rRNA. Forms part of two intersubunit bridges in the 70S ribosome. The polypeptide is Large ribosomal subunit protein uL14 (Vesicomyosocius okutanii subsp. Calyptogena okutanii (strain HA)).